The primary structure comprises 97 residues: Exodeoxyribonuclease 7 small subunit (97 aa).

Residues 64–97 form a disordered region; that stretch reads NGQLHPAEEKGDDVSNNGVQNQGYKSQFLDGDVF. Residues 77–88 are compositionally biased toward polar residues; that stretch reads VSNNGVQNQGYK.

Belongs to the XseB family. In terms of assembly, heterooligomer composed of large and small subunits.

The protein resides in the cytoplasm. It carries out the reaction Exonucleolytic cleavage in either 5'- to 3'- or 3'- to 5'-direction to yield nucleoside 5'-phosphates.. Functionally, bidirectionally degrades single-stranded DNA into large acid-insoluble oligonucleotides, which are then degraded further into small acid-soluble oligonucleotides. The sequence is that of Exodeoxyribonuclease 7 small subunit from Limosilactobacillus fermentum (strain NBRC 3956 / LMG 18251) (Lactobacillus fermentum).